The primary structure comprises 44 residues: Photosystem I reaction center subunit IX (44 aa).

A helical membrane pass occupies residues 9–29 (FVRSAPVVAAIWLSLTAGIII).

The protein belongs to the PsaJ family.

It localises to the cellular thylakoid membrane. Its function is as follows. May help in the organization of the PsaE and PsaF subunits. This chain is Photosystem I reaction center subunit IX, found in Prochlorococcus marinus (strain MIT 9301).